Here is a 555-residue protein sequence, read N- to C-terminus: Gamma-aminobutyric acid receptor subunit alpha-4 (555 aa).

An N-terminal signal peptide occupies residues 1–35; that stretch reads MVSAKKVPAIAMSFGVSFALLHFLCLAACLNESPG. Topologically, residues 36–259 are extracellular; the sequence is QNQKEEKLCP…FHLRRKMGYF (224 aa). Residue Asn47 is glycosylated (N-linked (GlcNAc...) asparagine). Arg100 lines the 4-aminobutanoate pocket. Asn144 and Asn157 each carry an N-linked (GlcNAc...) asparagine glycan. Thr163 lines the 4-aminobutanoate pocket. A disulfide bridge connects residues Cys172 and Cys186. A helical transmembrane segment spans residues 260–280; it reads MIQTYIPCIMTVILSQVSFWI. Over 281–284 the chain is Cytoplasmic; sequence NKES. The helical transmembrane segment at 285–305 threads the bilayer; the sequence is VPARTVFGITTVLTMTTLSIS. Residues 306-318 lie on the Extracellular side of the membrane; sequence ARHSLPKVSYATA. A helical membrane pass occupies residues 319 to 341; that stretch reads MDWFIAVCFAFVFSALIEFAAVN. At 342 to 518 the chain is on the cytoplasmic side; the sequence is YFTNVQMEKA…PPPSGSGTSK (177 aa). 2 disordered regions span residues 354 to 435 and 495 to 516; these read KTSK…SPNP and GTSG…GSGT. Over residues 410 to 421 the composition is skewed to low complexity; sequence SSKSSTVVQGSS. Over residues 422–435 the composition is skewed to polar residues; sequence EATPQSYLASSPNP. Residues 519–545 traverse the membrane as a helical segment; the sequence is IDKYARILFPVTFGAFNMVYWVVYLSK. The Extracellular portion of the chain corresponds to 546–555; sequence DTMEKSESLM.

Belongs to the ligand-gated ion channel (TC 1.A.9) family. Gamma-aminobutyric acid receptor (TC 1.A.9.5) subfamily. GABRA4 sub-subfamily. In terms of assembly, heteropentamer, formed by a combination of alpha (GABRA1-6), beta (GABRB1-3), gamma (GABRG1-3), delta (GABRD), epsilon (GABRE), rho (GABRR1-3), pi (GABRP) and theta (GABRQ) chains, each subunit exhibiting distinct physiological and pharmacological properties. In terms of tissue distribution, expressed in the brain.

The protein resides in the cell membrane. It is found in the postsynaptic cell membrane. The enzyme catalyses chloride(in) = chloride(out). Potentiated by histamine. Functionally, alpha subunit of the heteropentameric ligand-gated chloride channel gated by gamma-aminobutyric acid (GABA), a major inhibitory neurotransmitter in the brain. GABA-gated chloride channels, also named GABA(A) receptors (GABAAR), consist of five subunits arranged around a central pore and contain GABA active binding site(s) located at the alpha and beta subunit interface(s). When activated by GABA, GABAARs selectively allow the flow of chloride anions across the cell membrane down their electrochemical gradient. GABAARs containing alpha-4 are predominantly extrasynaptic, contributing to tonic inhibition in dentate granule cells and thalamic relay neurons. Extrasynaptic alpha-4-containing GABAARs control levels of excitability and network activity. GABAARs containing alpha-4 are often found with the delta or gamma-2 subunits, in combination with beta subunits. GABAAR containing alpha-4-beta-3-delta subunits can simultaneously bind GABA and histamine where histamine binds at the interface of two neighboring beta subunits, which may be involved in the regulation of sleep and wakefulness. This Bos taurus (Bovine) protein is Gamma-aminobutyric acid receptor subunit alpha-4 (GABRA4).